We begin with the raw amino-acid sequence, 475 residues long: Ankyrin repeat, SAM and basic leucine zipper domain-containing protein 1 (475 aa).

The tract at residues 1–22 is disordered; that stretch reads MAAGALRGLPVAGGGESSESED. 3 positions are modified to phosphoserine: Ser-17, Ser-18, and Ser-20. ANK repeat units lie at residues 45-74, 78-107, 110-144, 148-177, 181-210, and 214-243; these read EKKE…SVDS, YGWT…NASF, DKQT…DPNV, RLMT…EVNT, NGYT…NKML, and DGKM…PLEG. The SAM domain occupies 272–334; that stretch reads SYTAFGDLEV…KILATLKELQ (63 aa).

In terms of assembly, interacts with DDX4, PIWIL1, RANBP9 and TDRD1.

Its subcellular location is the cytoplasm. In terms of biological role, plays a central role during spermatogenesis by repressing transposable elements and preventing their mobilization, which is essential for the germline integrity. Acts via the piRNA metabolic process, which mediates the repression of transposable elements during meiosis by forming complexes composed of piRNAs and Piwi proteins and governs the methylation and subsequent repression of transposons. Its association with pi-bodies suggests a participation in the primary piRNAs metabolic process. Required prior to the pachytene stage to facilitate the production of multiple types of piRNAs, including those associated with repeats involved in the regulation of retrotransposons. May act by mediating protein-protein interactions during germ cell maturation. This chain is Ankyrin repeat, SAM and basic leucine zipper domain-containing protein 1 (ASZ1), found in Colobus guereza (Mantled guereza).